Consider the following 220-residue polypeptide: 5'(3')-deoxyribonucleotidase, mitochondrial (220 aa).

The transit peptide at Met1–Ala23 directs the protein to the mitochondrion. The active-site Nucleophile is the Asp33. The Mg(2+) site is built by Asp33 and Asp35. The active-site Proton donor is Asp35. Positions 35, 41, 67, 68, 69, 88, 122, and 157 each coordinate substrate. Asp168 provides a ligand contact to Mg(2+).

It belongs to the 5'(3')-deoxyribonucleotidase family. In terms of assembly, homodimer. The cofactor is Mg(2+).

It is found in the mitochondrion. Dephosphorylates specifically the 5' and 2'(3')-phosphates of uracil and thymine deoxyribonucleotides, and so protects mitochondrial DNA replication from excess dTTP. Has only marginal activity towards dIMP and dGMP. The sequence is that of 5'(3')-deoxyribonucleotidase, mitochondrial (Nt5m) from Mus musculus (Mouse).